Reading from the N-terminus, the 90-residue chain is Inner kinetochore subunit MHF1 (90 aa).

It belongs to the TAF9 family. CENP-S/MHF1 subfamily. In terms of assembly, the MHF histone-fold complex is a heterotetramer of 2 MHF1-MHF2 heterodimers. Together with MPH1/FANCM, forms the FANCM-MHF complex. Component of the inner kinetochore constitutive centromere-associated network (CCAN) (also known as central kinetochore CTF19 complex in yeast), which is composed of at least AME1, CHL4, CNN1, CTF3, CTF19, IML3, MCM16, MCM21, MCM22, MHF1, MHF2, MIF2, NKP1, NKP2, OKP1 and WIP1.

In terms of biological role, dsDNA-binding component of a FANCM-MHF complex involved in DNA damage repair and genome maintenance. FANCM-MHF promotes gene conversion at blocked replication forks, probably by reversal of the stalled fork. Component of the kinetochore, a multiprotein complex that assembles on centromeric DNA and attaches chromosomes to spindle microtubules, mediating chromosome segregation and sister chromatid segregation during meiosis and mitosis. Component of the inner kinetochore constitutive centromere-associated network (CCAN), which serves as a structural platform for outer kinetochore assembly. In Saccharomyces cerevisiae (strain ATCC 204508 / S288c) (Baker's yeast), this protein is Inner kinetochore subunit MHF1.